The sequence spans 298 residues: Bifunctional protein FolD (298 aa).

Residues 165 to 167, Ser190, and Ile231 each bind NADP(+); that span reads GRS.

This sequence belongs to the tetrahydrofolate dehydrogenase/cyclohydrolase family. As to quaternary structure, homodimer.

It carries out the reaction (6R)-5,10-methylene-5,6,7,8-tetrahydrofolate + NADP(+) = (6R)-5,10-methenyltetrahydrofolate + NADPH. The catalysed reaction is (6R)-5,10-methenyltetrahydrofolate + H2O = (6R)-10-formyltetrahydrofolate + H(+). Its pathway is one-carbon metabolism; tetrahydrofolate interconversion. Its function is as follows. Catalyzes the oxidation of 5,10-methylenetetrahydrofolate to 5,10-methenyltetrahydrofolate and then the hydrolysis of 5,10-methenyltetrahydrofolate to 10-formyltetrahydrofolate. This chain is Bifunctional protein FolD, found in Prochlorococcus marinus (strain MIT 9301).